The chain runs to 695 residues: N-terminal acetyltransferase A complex subunit-like protein C418.02 (695 aa).

TPR repeat units lie at residues 8–41 (EAFL…KPKH), 43–75 (DSVA…DPKS), 76–109 (QFCW…SPNN), 111–143 (SLWY…DSSN), 145–177 (EYRL…CNLS), 217–250 (FNFE…FPNR), 262–296 (WNFY…GISV), 365–398 (LWCT…TPTY), 399–432 (PELF…DKSD), and 477–510 (VWFL…YKKW).

As to quaternary structure, component of the N-terminal acetyltransferase A (NatA) complex.

Its subcellular location is the cytoplasm. The protein resides in the nucleus. Its function is as follows. Non-catalytic component of the NatA N-terminal acetyltransferase, which catalyzes acetylation of proteins beginning with Met-Ser, Met-Gly and Met-Ala. N-acetylation plays a role in normal eukaryotic translation and processing, protect against proteolytic degradation and protein turnover. The protein is N-terminal acetyltransferase A complex subunit-like protein C418.02 of Schizosaccharomyces pombe (strain 972 / ATCC 24843) (Fission yeast).